A 239-amino-acid chain; its full sequence is O-antigen export system ATP-binding protein RfbE (239 aa).

An ABC transporter domain is found at Val28–Leu239. Gly66–Ser73 is a binding site for ATP.

The protein belongs to the ABC transporter superfamily.

Its subcellular location is the cell inner membrane. Functionally, may form an ATP-driven O-antigen export apparatus, in association with RfbD. The protein is O-antigen export system ATP-binding protein RfbE (rfbE) of Yersinia enterocolitica.